The following is a 509-amino-acid chain: Histidine ammonia-lyase (509 aa).

The 5-imidazolinone (Ala-Gly) cross-link spans Ala142–Gly144. At Ser143 the chain carries 2,3-didehydroalanine (Ser).

The protein belongs to the PAL/histidase family. Contains an active site 4-methylidene-imidazol-5-one (MIO), which is formed autocatalytically by cyclization and dehydration of residues Ala-Ser-Gly.

It is found in the cytoplasm. The enzyme catalyses L-histidine = trans-urocanate + NH4(+). Its pathway is amino-acid degradation; L-histidine degradation into L-glutamate; N-formimidoyl-L-glutamate from L-histidine: step 1/3. This chain is Histidine ammonia-lyase, found in Pseudomonas aeruginosa (strain LESB58).